The primary structure comprises 301 residues: Protein ARMCX6 (301 aa).

A mitochondrion outer membrane (MOM)-targeting sequence region spans residues 1–6 (MGRARE). The Mitochondrial intermembrane portion of the chain corresponds to 1-7 (MGRAREM). A helical; Signal-anchor membrane pass occupies residues 8 to 25 (GWMAAGLMIGAGACYCMY). Positions 26-36 (KLTMGRSEGNE) are mitochondrion outer membrane (MOM)-targeting sequence. Residues 26 to 301 (KLTMGRSEGN…REMLVEAISP (276 aa)) are Cytoplasmic-facing. The segment at 69-101 (WSEDGDWDEPGAPGGTEDRRSGGGKANRAHPIK) is disordered.

It belongs to the eutherian X-chromosome-specific Armcx family. Highly expressed in the developing neural tissues, neural crest derivatives and hind limbs. Also widely expressed in the adult nervous tissue, especially in the forebrain, including the cerebral cortex, hippocampus and thalamus.

The protein resides in the mitochondrion. Its subcellular location is the mitochondrion outer membrane. Functionally, may regulate the dynamics and distribution of mitochondria in neural cells. The protein is Protein ARMCX6 (Armcx6) of Mus musculus (Mouse).